Reading from the N-terminus, the 1280-residue chain is MAEDSLRVGMISSGLAVLLNGEDAKENSSKARIVPHFDYSGHRPLERTIEFIFGLAEKSVGPLDGQVDSSLIRAVIKNQFSKLHGDLDVSVSQREGISVVHHGVGPPIVGLEEFSICGDIRIVKPPLVLESLALFSSARANACIWKGKWMYEVALETSGIQQLGWATLACPFTDQKGVGDADDSYAFDGRRVSKWNKEAEPYGQSWVAGDVIGCCIDLNCDEIYFYRNGVSLGAAFTGIRKLGPGFGYYPAISLSQGERCELNFGAYPFKYPVDGFQPLQEAPTRFSFATELLRCFSRLLDRPDRSLADTLSRLRRFASVEELFCPVSSAICDEFFYILEQDPLLAEYLGRGAFLSFLLETFRTQAPHDSSSLDKVLDVFLEFPQSHLIFEHVVNALACGCKTATLILTECPYSGPYPYLALACHLFKREELMVQWWRSLHFEFLFEGFLSCRSSNKHDLQHLMPVVWWPGSSEDISYESSMGFTISALSEAINKIEEKQRNLCLLVIQFIPPVSPPQLPGSAFRGFLQNLLLKNRGADRTLAPSGVTRNSVLVSLFSVILHFLSEGFAMLKSSEAVHHNVGFLHRGGQQKFPLSLFLKNDPHRADITRLGGLFSHISKSYPTDDQEEEIMRWEEGCMDDEQNRVTHATEQKPCCCLAYDTDLTKSLKDRGKNTAQSSRGRCSSIPERSSHVAAECSAGSFSEEIDDKPSTSNQSDPDFGYRPVRFMRTALQESRISSAILSEEELLDALLLLYHIAVAPNFKQASYYMSHQSQSISLLEETDKQIRERASCDQIKRLKEARNNYKEDVMDCVRHSAWFRISLFSRWKQRGMYALCMWVVQLLLVLSKMDSVFVYIPEFYLESLVDCFHVLRKSDPPFVPSTTFIKQGLSSFITFVVTHFNDSRISNTDLKDLLLQSISVLVQYKEYLEAFENNEAATRHMPAALLAAFDNRSWIPVTNIFLRLCKGSGFSSLKNGESSFSSTVFQALLRDACINDGELLSTFLNRLFNTLSWTITEFSVSVREMQEKYQVMEFQQRKCCVIFELSSNLARVLEFCTYAMPQAFLAGTDTNLRRLTELILFILNHMTSAVDDEFFDLSLRRQGQPSEKVSRGILLAPLVGIILNLLEASEDSKPKQQHDVIGLFASMDCPDTVYYGFQYLLEYNWDGCVSGDDAYVKKLGQLENFLSHLINRASSQEPERKEESFNKDTTDIEDNTCCICYAGEANAMIAPCSHRSCYGCITRHLLNCQRCFFCNATVIDVIRDKEEEEEEDDDGHKRST.

The B30.2/SPRY domain occupies 82 to 269 (KLHGDLDVSV…CELNFGAYPF (188 aa)). The helical transmembrane segment at 551 to 571 (SVLVSLFSVILHFLSEGFAML) threads the bilayer. Residues 669 to 719 (DRGKNTAQSSRGRCSSIPERSSHVAAECSAGSFSEEIDDKPSTSNQSDPDF) are disordered. The helical transmembrane segment at 834 to 854 (ALCMWVVQLLLVLSKMDSVFV) threads the bilayer. The RING-type zinc-finger motif lies at 1217–1252 (CCICYAGEANAMIAPCSHRSCYGCITRHLLNCQRCF).

It localises to the membrane. The catalysed reaction is S-ubiquitinyl-[E2 ubiquitin-conjugating enzyme]-L-cysteine + [acceptor protein]-L-lysine = [E2 ubiquitin-conjugating enzyme]-L-cysteine + N(6)-ubiquitinyl-[acceptor protein]-L-lysine.. In terms of biological role, E3 ubiquitin-protein ligase that promotes the ubiquitination and proteasomal degradation of KRP1 and KRP2. The chain is E3 ubiquitin-protein ligase RKP (RKP) from Arabidopsis thaliana (Mouse-ear cress).